The primary structure comprises 126 residues: Small ribosomal subunit protein uS13 (126 aa).

The disordered stretch occupies residues 92-126 (HRMGLPVRGQRTRTNARTRRGRRQTVAGKKKAPGK). A compositionally biased stretch (basic residues) spans 101 to 126 (QRTRTNARTRRGRRQTVAGKKKAPGK).

It belongs to the universal ribosomal protein uS13 family. As to quaternary structure, part of the 30S ribosomal subunit. Forms a loose heterodimer with protein S19. Forms two bridges to the 50S subunit in the 70S ribosome.

In terms of biological role, located at the top of the head of the 30S subunit, it contacts several helices of the 16S rRNA. In the 70S ribosome it contacts the 23S rRNA (bridge B1a) and protein L5 of the 50S subunit (bridge B1b), connecting the 2 subunits; these bridges are implicated in subunit movement. Contacts the tRNAs in the A and P-sites. The protein is Small ribosomal subunit protein uS13 of Nostoc punctiforme (strain ATCC 29133 / PCC 73102).